A 949-amino-acid chain; its full sequence is Thrombospondin-4-B (949 aa).

The first 22 residues, methionine 1 to alanine 22, serve as a signal peptide directing secretion. The Laminin G-like domain maps to glutamate 23–aspartate 198. 21 disulfides stabilise this stretch: cysteine 276–cysteine 287, cysteine 281–cysteine 296, cysteine 299–cysteine 310, cysteine 316–cysteine 327, cysteine 321–cysteine 336, cysteine 339–cysteine 363, cysteine 369–cysteine 383, cysteine 377–cysteine 392, cysteine 395–cysteine 407, cysteine 413–cysteine 427, cysteine 421–cysteine 437, cysteine 439–cysteine 450, cysteine 466–cysteine 471, cysteine 476–cysteine 496, cysteine 512–cysteine 532, cysteine 535–cysteine 555, cysteine 571–cysteine 591, cysteine 594–cysteine 614, cysteine 632–cysteine 652, cysteine 672–cysteine 692, and cysteine 708–cysteine 929. An EGF-like 1; calcium-binding domain is found at aspartate 312 to glutamate 349. The 44-residue stretch at aspartate 365–lysine 408 folds into the EGF-like 2; calcium-binding domain. Positions proline 409–glycine 451 constitute an EGF-like 3 domain. TSP type-3 repeat units lie at residues lysine 452–glutamine 484, glutamate 485–glutamine 520, glutamine 521–glutamine 543, arginine 544–glutamine 579, leucine 580–glutamine 602, serine 603–glutamine 640, leucine 641–glutamine 680, and isoleucine 681–leucine 716. The segment at aspartate 578 to asparagine 671 is disordered. N-linked (GlcNAc...) asparagine glycosylation is found at asparagine 601 and asparagine 637. The segment covering glycine 649 to glycine 660 has biased composition (acidic residues). A TSP C-terminal domain is found at arginine 720–proline 934. N-linked (GlcNAc...) asparagine glycosylation is present at asparagine 930.

The protein belongs to the thrombospondin family. As to quaternary structure, homotrimer; disulfide-linked.

Its subcellular location is the endoplasmic reticulum. The protein resides in the sarcoplasmic reticulum. The protein localises to the secreted. It is found in the extracellular space. It localises to the extracellular matrix. Adhesive glycoprotein that mediates cell-to-cell and cell-to-matrix interactions and may be involved in various processes including cellular proliferation, migration, adhesion and attachment. May play a role in ER stress response. In Danio rerio (Zebrafish), this protein is Thrombospondin-4-B (thbs4b).